Consider the following 72-residue polypeptide: Crustacean hyperglycemic hormone (72 aa).

Cystine bridges form between Cys-7/Cys-43, Cys-23/Cys-39, and Cys-26/Cys-52. Residue Val-72 is modified to Valine amide.

Its subcellular location is the secreted. Functionally, hormone found in the sinus gland of isopods and decapods which controls the blood sugar level. Has a secretagogue action over the amylase released from the midgut gland. May act as a stress hormone and may be involved in the control of molting and reproduction. In Penaeus schmitti (White shrimp), this protein is Crustacean hyperglycemic hormone.